The following is a 345-amino-acid chain: Ninja-family protein AFP1 (345 aa).

Disordered regions lie at residues Thr114–Asn185 and Gln201–Ser256. Composition is skewed to basic and acidic residues over residues Glu123–Thr132 and Leu222–Arg232. Positions Pro235–Thr249 are enriched in low complexity.

The protein belongs to the Ninja family. Forms a heterodimer with AFP2. Interacts with ABI5/DPBF1, DPBF2, AREB3/DPBF3, ABF1, ABF3/DPBF5 and ABF4/AREB2.

It is found in the nucleus. Acts as a negative regulator of abscisic acid (ABA) response during germination through the ubiquitin-mediated proteolysis of ABI5/DPBF1. This chain is Ninja-family protein AFP1 (AFP1), found in Arabidopsis thaliana (Mouse-ear cress).